The primary structure comprises 96 residues: Large ribosomal subunit protein bL21 (96 aa).

The span at 73-84 shows a compositional bias: basic residues; sequence KRRKRYQSRNGH. Positions 73–96 are disordered; it reads KRRKRYQSRNGHRQQMTQIEVVSL. The span at 85–96 shows a compositional bias: polar residues; that stretch reads RQQMTQIEVVSL.

The protein belongs to the bacterial ribosomal protein bL21 family. Part of the 50S ribosomal subunit. Contacts protein L20.

Functionally, this protein binds to 23S rRNA in the presence of protein L20. The sequence is that of Large ribosomal subunit protein bL21 from Chlorobium luteolum (strain DSM 273 / BCRC 81028 / 2530) (Pelodictyon luteolum).